The chain runs to 337 residues: tRNA N6-adenosine threonylcarbamoyltransferase (337 aa).

Fe cation is bound by residues His-111 and His-115. Residues Leu-134–Gly-138, Asp-167, Gly-180, and Asn-272 each bind substrate. Position 300 (Asp-300) interacts with Fe cation.

It belongs to the KAE1 / TsaD family. It depends on Fe(2+) as a cofactor.

It is found in the cytoplasm. It catalyses the reaction L-threonylcarbamoyladenylate + adenosine(37) in tRNA = N(6)-L-threonylcarbamoyladenosine(37) in tRNA + AMP + H(+). In terms of biological role, required for the formation of a threonylcarbamoyl group on adenosine at position 37 (t(6)A37) in tRNAs that read codons beginning with adenine. Is involved in the transfer of the threonylcarbamoyl moiety of threonylcarbamoyl-AMP (TC-AMP) to the N6 group of A37, together with TsaE and TsaB. TsaD likely plays a direct catalytic role in this reaction. This Pectobacterium atrosepticum (strain SCRI 1043 / ATCC BAA-672) (Erwinia carotovora subsp. atroseptica) protein is tRNA N6-adenosine threonylcarbamoyltransferase.